A 264-amino-acid polypeptide reads, in one-letter code: THAP domain-containing protein 10 (264 aa).

The THAP-type zinc-finger motif lies at 1–90 (MPARCVAAHC…LVAGAVPTLH (90 aa)). 2 disordered regions span residues 90 to 136 (HRVP…PRAG) and 160 to 195 (TQPH…KRPR). Basic and acidic residues predominate over residues 99 to 122 (GGEEGDQAGRPDTRGELQAARHSE). Residues 160–175 (TQPHADNPSNTVTSVP) show a composition bias toward polar residues.

This chain is THAP domain-containing protein 10 (THAP10), found in Pongo abelii (Sumatran orangutan).